Consider the following 324-residue polypeptide: Beta-ketoacyl-[acyl-carrier-protein] synthase III (324 aa).

Residues C112 and H249 contribute to the active site. The tract at residues 250 to 254 is ACP-binding; it reads QANRR. Residue N279 is part of the active site.

This sequence belongs to the thiolase-like superfamily. FabH family. As to quaternary structure, homodimer.

It is found in the cytoplasm. It carries out the reaction malonyl-[ACP] + acetyl-CoA + H(+) = 3-oxobutanoyl-[ACP] + CO2 + CoA. It functions in the pathway lipid metabolism; fatty acid biosynthesis. Catalyzes the condensation reaction of fatty acid synthesis by the addition to an acyl acceptor of two carbons from malonyl-ACP. Catalyzes the first condensation reaction which initiates fatty acid synthesis and may therefore play a role in governing the total rate of fatty acid production. Possesses both acetoacetyl-ACP synthase and acetyl transacylase activities. Its substrate specificity determines the biosynthesis of branched-chain and/or straight-chain of fatty acids. The protein is Beta-ketoacyl-[acyl-carrier-protein] synthase III of Streptococcus pyogenes serotype M3 (strain ATCC BAA-595 / MGAS315).